We begin with the raw amino-acid sequence, 386 residues long: Acetate kinase (386 aa).

Asn-7 is a binding site for Mg(2+). An ATP-binding site is contributed by Lys-14. Position 78 (Arg-78) interacts with substrate. The active-site Proton donor/acceptor is the Asp-135. ATP contacts are provided by residues 195-199, 268-270, and 316-320; these read HLGNG, DMR, and GIGEN. Glu-370 contacts Mg(2+).

It belongs to the acetokinase family. As to quaternary structure, homodimer. Requires Mg(2+) as cofactor. It depends on Mn(2+) as a cofactor.

Its subcellular location is the cytoplasm. The enzyme catalyses acetate + ATP = acetyl phosphate + ADP. The protein operates within metabolic intermediate biosynthesis; acetyl-CoA biosynthesis; acetyl-CoA from acetate: step 1/2. Catalyzes the formation of acetyl phosphate from acetate and ATP. Can also catalyze the reverse reaction. The protein is Acetate kinase of Pseudarthrobacter chlorophenolicus (strain ATCC 700700 / DSM 12829 / CIP 107037 / JCM 12360 / KCTC 9906 / NCIMB 13794 / A6) (Arthrobacter chlorophenolicus).